A 530-amino-acid polypeptide reads, in one-letter code: Cation channel sperm-associated protein 2 (530 aa).

Residues 1 to 108 (MAAYQQEEQM…LWAGWVLECP (108 aa)) are Cytoplasmic-facing. The chain crosses the membrane as a helical span at residues 109–131 (LFKNFIIFLVFLNTIILMVEIEL). Residues 132 to 140 (LESTNTKLW) lie on the Extracellular side of the membrane. A helical membrane pass occupies residues 141-166 (PLKLTLEVAAWFILLIFILEILLKWL). At 167 to 175 (SNFSVFWKS) the chain is on the cytoplasmic side. The helical transmembrane segment at 176-200 (AWNVFDFVVTMLSLLPEVVVLVGVT) threads the bilayer. The Extracellular portion of the chain corresponds to 201–203 (GQS). The chain crosses the membrane as a helical span at residues 204–222 (VWLQLLRICRVLRSLKLLA). Topologically, residues 223–239 (QFRQIQIIILVLVRALK) are cytoplasmic. Residues 240–262 (SMTFLLMLLLIFFYIFAVTGVYV) form a helical membrane-spanning segment. The Extracellular portion of the chain corresponds to 263-281 (FSEYTRSPRQDLEYHVFFS). An intramembrane region (helical; Pore-forming) is located at residues 282 to 294 (DLPNSLVTVFILF). Residues 295-314 (TLDHWYALLQDVWKVPEVSR) are Extracellular-facing. Residues 315–341 (IFSSIYFILWLLLGSIIFRSIIVAMMV) traverse the membrane as a helical segment. Residues 342-530 (TNFQNIRKEL…VQALMNLEDK (189 aa)) are Cytoplasmic-facing. A disordered region spans residues 378 to 458 (MSHEALTSSH…TSSSYSSSSE (81 aa)). Residues 429-440 (KTEETLSKKREY) show a composition bias toward basic and acidic residues. Low complexity predominate over residues 442–458 (SSSCVSSTSSSYSSSSE).

This sequence belongs to the cation channel sperm-associated (TC 1.A.1.19) family. In terms of assembly, component of the CatSper complex or CatSpermasome composed of the core pore-forming members CATSPER1, CATSPER2, CATSPER3 and CATSPER4 as well as auxiliary members CATSPERB, CATSPERG, CATSPERD, CATSPERE, CATSPERZ, C2CD6/CATSPERT, TMEM249, TMEM262 and EFCAB9. HSPA1 may be an additional auxiliary complex member. The core complex members CATSPER1, CATSPER2, CATSPER3 and CATSPER4 form a heterotetrameric channel. The auxiliary CATSPERB, CATSPERG, CATSPERD and CATSPERE subunits form a pavilion-like structure over the pore which stabilizes the complex through interactions with CATSPER4, CATSPER3, CATSPER1 and CATSPER2 respectively. TMEM262/CATSPERH interacts with CATSPERB, further stabilizing the complex. C2CD6/CATSPERT interacts at least with CATSPERD and is required for targeting the CatSper complex in the flagellar membrane. Interacts with Ca(v)3.3/CACNA1I, leading to suppression of T-type calcium channel activity. Testis-specific.

The protein localises to the cell projection. It is found in the cilium. The protein resides in the flagellum membrane. It carries out the reaction Ca(2+)(in) = Ca(2+)(out). Its activity is regulated as follows. The CatSper calcium channel is indirectly activated by extracellular progesterone and prostaglandins following the sequence: progesterone &gt; PGF1-alpha = PGE1 &gt; PGA1 &gt; PGE2 &gt;&gt; PGD2. The CatSper calcium channel is directly inhibited by endocannabinoid 2-arachidonoylglycerol (2AG). Indirect activation by progesterone takes place via the following mechanism: progesterone binds and activates the acylglycerol lipase ABHD2, which in turn mediates hydrolysis of 2AG inhibitor, relieving inhibition of the CatSper channel. The primary effect of progesterone activation is to shift voltage dependence towards more physiological, negative membrane potentials; it is not mediated by metabotropic receptors and second messengers. Sperm capacitation enhances the effect of progesterone by providing additional negative shift. Also activated by the elevation of intracellular pH. Functionally, pore-forming subunit of the CatSper complex, a sperm-specific voltage-gated calcium channel, that plays a central role in calcium-dependent physiological responses essential for successful fertilization, such as sperm hyperactivation, acrosome reaction and chemotaxis towards the oocyte. This Homo sapiens (Human) protein is Cation channel sperm-associated protein 2 (CATSPER2).